Here is a 547-residue protein sequence, read N- to C-terminus: Serine/threonine-protein kinase RIO2 (547 aa).

A Protein kinase domain is found at 97-273 (VGNQMGVGKE…RDVKCIREFF (177 aa)). Residue lysine 123 participates in ATP binding. The Proton acceptor role is filled by aspartate 228. A phosphoserine mark is found at serine 332, serine 337, serine 350, serine 362, serine 385, and serine 390. A disordered region spans residues 352–385 (LEKEADPADESGGSWCCSSTDSKQIKDGGLPEES). The Nuclear export signal signature appears at 399–408 (AVEEMERQVL). Residues 404–445 (ERQVLPHRSVTEFSEESRRTENDGQPGQRSPAGSEDCDDEPP) are disordered. Residues serine 412, serine 417, serine 433, serine 437, and serine 543 each carry the phosphoserine modification.

The protein belongs to the protein kinase superfamily. RIO-type Ser/Thr kinase family. Associated with late 40S pre-ribosomal particles. Interacts with PLK1 (via its N-terminus). It depends on Mg(2+) as a cofactor. Autophosphorylated (in vitro). Phosphorylation affects the timing of the metaphase-anaphase transition.

It is found in the cytoplasm. It carries out the reaction L-seryl-[protein] + ATP = O-phospho-L-seryl-[protein] + ADP + H(+). The enzyme catalyses L-threonyl-[protein] + ATP = O-phospho-L-threonyl-[protein] + ADP + H(+). In terms of biological role, serine/threonine-protein kinase involved in the final steps of cytoplasmic maturation of the 40S ribosomal subunit. Involved in export of the 40S pre-ribosome particles (pre-40S) from the nucleus to the cytoplasm. Its kinase activity is required for the release of NOB1, PNO1 and LTV1 from the late pre-40S and the processing of 18S-E pre-rRNA to the mature 18S rRNA. May regulate the timing of the metaphase-anaphase transition during mitotic progression, and its phosphorylation, may regulate this function. This chain is Serine/threonine-protein kinase RIO2 (Riok2), found in Mus musculus (Mouse).